Here is a 381-residue protein sequence, read N- to C-terminus: Peptidoglycan transport system permease protein YejE (381 aa).

5 helical membrane-spanning segments follow: residues 38-58 (YWSFWLFLILFFLSLIAEFIA), 183-203 (VLFGLTLTIASALVGVTAGAI), 230-250 (ILLIIAAILPPGFFVLLGIML), 292-312 (LLPNAMVATLTFLPFILSGSI), and 347-367 (WLGLTAFFTMSIMLSLLIFVG). The ABC transmembrane type-1 domain occupies 179-371 (FRISVLFGLT…LLIFVGEAVR (193 aa)).

This sequence belongs to the binding-protein-dependent transport system permease family. The complex is composed of one ATP-binding protein (YejF), two transmembrane proteins (YejB and YejE) and a solute-binding protein (YepA or YejA).

The protein resides in the cell inner membrane. Functionally, part of the ABC transporter complex YejBEF-YepA involved in the uptake of muropeptides, the breakdown products of cell wall peptidoglycan. The import of muropeptides into the cell enables peptidoglycan recycling, which is vital for cell wall integrity in this bacterium. Is also probably part of the ABC transporter complex YejABEF, which is likely involved in broad-spectrum peptide import. Responsible for the translocation of the substrate across the membrane. The chain is Peptidoglycan transport system permease protein YejE from Agrobacterium fabrum (strain C58 / ATCC 33970) (Agrobacterium tumefaciens (strain C58)).